Reading from the N-terminus, the 228-residue chain is uncharacterized protein (228 aa).

In terms of domain architecture, HTH gntR-type spans 11–78; the sequence is PPVNQQIYRI…PQRGSYVNKI (68 aa). A DNA-binding region (H-T-H motif) is located at residues 38-57; the sequence is EKEVSVRFNVSRQPVREAFI.

This is an uncharacterized protein from Escherichia coli O6:H1 (strain CFT073 / ATCC 700928 / UPEC).